The chain runs to 136 residues: Small ribosomal subunit protein uS9 (136 aa).

Belongs to the universal ribosomal protein uS9 family.

This is Small ribosomal subunit protein uS9 from Synechococcus sp. (strain JA-2-3B'a(2-13)) (Cyanobacteria bacterium Yellowstone B-Prime).